The following is a 31-amino-acid chain: Cytochrome b6-f complex subunit 6 (31 aa).

A helical transmembrane segment spans residues 4–26 (ITSYFGFLLAASTITPALLIGLN).

The protein belongs to the PetL family. The 4 large subunits of the cytochrome b6-f complex are cytochrome b6, subunit IV (17 kDa polypeptide, PetD), cytochrome f and the Rieske protein, while the 4 small subunits are PetG, PetL, PetM and PetN. The complex functions as a dimer.

The protein resides in the plastid. It is found in the chloroplast thylakoid membrane. Component of the cytochrome b6-f complex, which mediates electron transfer between photosystem II (PSII) and photosystem I (PSI), cyclic electron flow around PSI, and state transitions. PetL is important for photoautotrophic growth as well as for electron transfer efficiency and stability of the cytochrome b6-f complex. In Calycanthus floridus var. glaucus (Eastern sweetshrub), this protein is Cytochrome b6-f complex subunit 6.